Consider the following 121-residue polypeptide: Large ribosomal subunit protein bL20 (121 aa).

It belongs to the bacterial ribosomal protein bL20 family.

Its function is as follows. Binds directly to 23S ribosomal RNA and is necessary for the in vitro assembly process of the 50S ribosomal subunit. It is not involved in the protein synthesizing functions of that subunit. The chain is Large ribosomal subunit protein bL20 from Chlamydia caviae (strain ATCC VR-813 / DSM 19441 / 03DC25 / GPIC) (Chlamydophila caviae).